The chain runs to 145 residues: Large ribosomal subunit protein mL59 (145 aa).

Residues 123–135 are compositionally biased toward basic and acidic residues; sequence LKKTSKFKNERQK. A disordered region spans residues 123-145; that stretch reads LKKTSKFKNERQKASKIAKPSPF.

Belongs to the mitochondrion-specific ribosomal protein mL59 family. In terms of assembly, component of the mitochondrial large ribosomal subunit (mt-LSU). Mature yeast 74S mitochondrial ribosomes consist of a small (37S) and a large (54S) subunit. The 37S small subunit contains a 15S ribosomal RNA (15S mt-rRNA) and at least 32 different proteins. The 54S large subunit contains a 21S rRNA (21S mt-rRNA) and at least 45 different proteins.

It is found in the mitochondrion. In terms of biological role, component of the mitochondrial ribosome (mitoribosome), a dedicated translation machinery responsible for the synthesis of mitochondrial genome-encoded proteins, including at least some of the essential transmembrane subunits of the mitochondrial respiratory chain. The mitoribosomes are attached to the mitochondrial inner membrane and translation products are cotranslationally integrated into the membrane. This Schizosaccharomyces pombe (strain 972 / ATCC 24843) (Fission yeast) protein is Large ribosomal subunit protein mL59 (mrpl25).